We begin with the raw amino-acid sequence, 437 residues long: 26S proteasome regulatory subunit 4 homolog (437 aa).

The segment at 1-47 (MGQGVSSGQDKKKKKGSNQKPKYEPPVQSKFGRKKRKGGPATAEKLP) is disordered. Gly2 carries the N-myristoyl glycine lipid modification. 223–230 (GAPGTGKT) is an ATP binding site. Residues Lys234, Lys255, and Lys290 each participate in a glycyl lysine isopeptide (Lys-Gly) (interchain with G-Cter in ubiquitin) cross-link.

The protein belongs to the AAA ATPase family.

It localises to the cytoplasm. The protein resides in the nucleus. Functionally, the 26S proteasome is involved in the ATP-dependent degradation of ubiquitinated proteins. The regulatory (or ATPase) complex confers ATP dependency and substrate specificity to the 26S complex. Has ATPase activity. This Saccharomyces cerevisiae (strain ATCC 204508 / S288c) (Baker's yeast) protein is 26S proteasome regulatory subunit 4 homolog (RPT2).